We begin with the raw amino-acid sequence, 137 residues long: Type III secretion protein HrcQb (137 aa).

Over residues 1-22 the composition is skewed to acidic residues; it reads MSTEDLYQDDVESLEDYDDETA. The interval 1–67 is disordered; the sequence is MSTEDLYQDD…EQQAPSGLDS (67 aa). Residues 23–33 show a composition bias toward basic and acidic residues; the sequence is EQEHEHEHEQQ. A compositionally biased stretch (acidic residues) spans 36–58; the sequence is EPDDESEYAEAEPDDDEQEEQEE.

This sequence belongs to the FliN/MopA/SpaO family. Homotetramer. The four monomers assemble into two tightly bound homodimers. Interacts with HrcQa.

Its subcellular location is the cytoplasm. Component of the type III secretion system, which is required for effector protein delivery, parasitism, and pathogenicity. Probably participates in the formation of a C-ring-like assembly along with HrcQa. The chain is Type III secretion protein HrcQb (hrcQb) from Pseudomonas syringae pv. tomato (strain ATCC BAA-871 / DC3000).